The following is a 390-amino-acid chain: Coiled-coil domain-containing protein 85C (390 aa).

Coiled coils occupy residues 26–86 and 116–146; these read KEEL…RELC and KEVG…KEII. A disordered region spans residues 153 to 237; it reads RNGPGSRSSI…RSIPNGLNDS (85 aa). Residues 157–172 are compositionally biased toward polar residues; sequence GSRSSIDSQNSLTNLN. Residues 182-194 are compositionally biased toward low complexity; that stretch reads DGSSTSSTGSAGS.

The protein belongs to the CCDC85 family.

The protein localises to the cell junction. It localises to the tight junction. It is found in the adherens junction. In terms of biological role, may play a role in cell-cell adhesion and epithelium development. May play an important role in cortical development, especially in the maintenance of radial glia. The sequence is that of Coiled-coil domain-containing protein 85C (ccdc85c) from Xenopus laevis (African clawed frog).